The chain runs to 360 residues: Putative FBD-associated F-box protein At5g56430 (360 aa).

An F-box domain is found at 1–53; it reads MRNISDLPNDLLVKILSLIPIKVAASTSLLSKRWGSVWKLIPTLDYDGTYSAA. Kelch repeat units follow at residues 140 to 186 and 235 to 285; these read IRYT…EQLD and VMCS…SVPE. In terms of domain architecture, FBD spans 276–326; sequence KWEQPNSVPECLLVSLETVKWILYKGTQEEKDVVKYLLKNGNFIKTMSIRF.

In Arabidopsis thaliana (Mouse-ear cress), this protein is Putative FBD-associated F-box protein At5g56430.